Reading from the N-terminus, the 327-residue chain is tRNA uridine(34) hydroxylase (327 aa).

Residues 130–224 enclose the Rhodanese domain; the sequence is LDEDTVVLDT…YGKDPEVQGE (95 aa). Cysteine 184 serves as the catalytic Cysteine persulfide intermediate.

This sequence belongs to the TrhO family.

The catalysed reaction is uridine(34) in tRNA + AH2 + O2 = 5-hydroxyuridine(34) in tRNA + A + H2O. Catalyzes oxygen-dependent 5-hydroxyuridine (ho5U) modification at position 34 in tRNAs. The sequence is that of tRNA uridine(34) hydroxylase from Streptococcus thermophilus (strain ATCC BAA-250 / LMG 18311).